Consider the following 380-residue polypeptide: Cytochrome b (380 aa).

The next 4 helical transmembrane spans lie at 34–54, 78–99, 114–134, and 179–199; these read FGSL…LLAA, WLIR…YLHI, WNTG…GYVL, and FFTL…IHLT. Histidine 84 and histidine 98 together coordinate heme b. Residues histidine 183 and histidine 197 each contribute to the heme b site. Histidine 202 is a binding site for a ubiquinone. The next 4 helical transmembrane spans lie at 227 to 247, 289 to 309, 321 to 341, and 348 to 368; these read TKDI…ALFS, LGGV…PLLH, LSQL…WIGS, and FIII…ILFP.

The protein belongs to the cytochrome b family. The cytochrome bc1 complex contains 11 subunits: 3 respiratory subunits (MT-CYB, CYC1 and UQCRFS1), 2 core proteins (UQCRC1 and UQCRC2) and 6 low-molecular weight proteins (UQCRH/QCR6, UQCRB/QCR7, UQCRQ/QCR8, UQCR10/QCR9, UQCR11/QCR10 and a cleavage product of UQCRFS1). This cytochrome bc1 complex then forms a dimer. Requires heme b as cofactor.

It localises to the mitochondrion inner membrane. Component of the ubiquinol-cytochrome c reductase complex (complex III or cytochrome b-c1 complex) that is part of the mitochondrial respiratory chain. The b-c1 complex mediates electron transfer from ubiquinol to cytochrome c. Contributes to the generation of a proton gradient across the mitochondrial membrane that is then used for ATP synthesis. This Eudyptes chrysolophus (Macaroni penguin) protein is Cytochrome b (MT-CYB).